We begin with the raw amino-acid sequence, 200 residues long: MYVMKQSGWLEVICGSMFSGKSEELIRRAKRATFAKQEVKIFKPAIDNRYSTSSVVSHNGSSVDGIAVASPKDIITHISERTDVIGIDEVQFFDETIIDIVTQLADKGYRVIVAGLDQDFRGEPFGVVPHLMACAELVTKLQAVCSVCGSPASRTQRLIDGKPASYDDPIILVGAQESYEARCRHHHEVPRLDVGTTLDN.

ATP is bound by residues 15–22 (GSMFSGKS) and 88–91 (DEVQ). Glu-89 acts as the Proton acceptor in catalysis. 4 residues coordinate Zn(2+): Cys-145, Cys-148, Cys-183, and His-186.

The protein belongs to the thymidine kinase family. Homotetramer.

Its subcellular location is the cytoplasm. It catalyses the reaction thymidine + ATP = dTMP + ADP + H(+). This is Thymidine kinase from Bacillus pumilus (strain SAFR-032).